Here is a 299-residue protein sequence, read N- to C-terminus: Bifunctional protein FolD (299 aa).

Residues 179 to 181 (GPG) and isoleucine 245 contribute to the NADP(+) site.

It belongs to the tetrahydrofolate dehydrogenase/cyclohydrolase family. In terms of assembly, homodimer.

The catalysed reaction is (6R)-5,10-methylene-5,6,7,8-tetrahydrofolate + NADP(+) = (6R)-5,10-methenyltetrahydrofolate + NADPH. It catalyses the reaction (6R)-5,10-methenyltetrahydrofolate + H2O = (6R)-10-formyltetrahydrofolate + H(+). It functions in the pathway one-carbon metabolism; tetrahydrofolate interconversion. Catalyzes the oxidation of 5,10-methylenetetrahydrofolate to 5,10-methenyltetrahydrofolate and then the hydrolysis of 5,10-methenyltetrahydrofolate to 10-formyltetrahydrofolate. In Deinococcus radiodurans (strain ATCC 13939 / DSM 20539 / JCM 16871 / CCUG 27074 / LMG 4051 / NBRC 15346 / NCIMB 9279 / VKM B-1422 / R1), this protein is Bifunctional protein FolD.